A 178-amino-acid chain; its full sequence is ATP synthase subunit delta (178 aa).

This sequence belongs to the ATPase delta chain family. In terms of assembly, F-type ATPases have 2 components, F(1) - the catalytic core - and F(0) - the membrane proton channel. F(1) has five subunits: alpha(3), beta(3), gamma(1), delta(1), epsilon(1). F(0) has three main subunits: a(1), b(2) and c(10-14). The alpha and beta chains form an alternating ring which encloses part of the gamma chain. F(1) is attached to F(0) by a central stalk formed by the gamma and epsilon chains, while a peripheral stalk is formed by the delta and b chains.

The protein localises to the cell inner membrane. F(1)F(0) ATP synthase produces ATP from ADP in the presence of a proton or sodium gradient. F-type ATPases consist of two structural domains, F(1) containing the extramembraneous catalytic core and F(0) containing the membrane proton channel, linked together by a central stalk and a peripheral stalk. During catalysis, ATP synthesis in the catalytic domain of F(1) is coupled via a rotary mechanism of the central stalk subunits to proton translocation. Its function is as follows. This protein is part of the stalk that links CF(0) to CF(1). It either transmits conformational changes from CF(0) to CF(1) or is implicated in proton conduction. This is ATP synthase subunit delta from Hahella chejuensis (strain KCTC 2396).